Here is a 297-residue protein sequence, read N- to C-terminus: tRNA-cytidine(32) 2-sulfurtransferase (297 aa).

Positions 45–50 match the PP-loop motif motif; it reads SGGKDS. Positions 120, 123, and 211 each coordinate [4Fe-4S] cluster.

It belongs to the TtcA family. As to quaternary structure, homodimer. Mg(2+) serves as cofactor. The cofactor is [4Fe-4S] cluster.

The protein resides in the cytoplasm. It carries out the reaction cytidine(32) in tRNA + S-sulfanyl-L-cysteinyl-[cysteine desulfurase] + AH2 + ATP = 2-thiocytidine(32) in tRNA + L-cysteinyl-[cysteine desulfurase] + A + AMP + diphosphate + H(+). The protein operates within tRNA modification. In terms of biological role, catalyzes the ATP-dependent 2-thiolation of cytidine in position 32 of tRNA, to form 2-thiocytidine (s(2)C32). The sulfur atoms are provided by the cysteine/cysteine desulfurase (IscS) system. The chain is tRNA-cytidine(32) 2-sulfurtransferase from Vibrio parahaemolyticus serotype O3:K6 (strain RIMD 2210633).